The sequence spans 274 residues: Tryptophan synthase alpha chain (274 aa).

Active-site proton acceptor residues include Glu-49 and Asp-60.

This sequence belongs to the TrpA family. As to quaternary structure, tetramer of two alpha and two beta chains.

The enzyme catalyses (1S,2R)-1-C-(indol-3-yl)glycerol 3-phosphate + L-serine = D-glyceraldehyde 3-phosphate + L-tryptophan + H2O. It functions in the pathway amino-acid biosynthesis; L-tryptophan biosynthesis; L-tryptophan from chorismate: step 5/5. The alpha subunit is responsible for the aldol cleavage of indoleglycerol phosphate to indole and glyceraldehyde 3-phosphate. In Alkalilimnicola ehrlichii (strain ATCC BAA-1101 / DSM 17681 / MLHE-1), this protein is Tryptophan synthase alpha chain.